Consider the following 1015-residue polypeptide: Putative calcium-transporting ATPase 7, plasma membrane-type (1015 aa).

Met1 is subject to N-acetylmethionine. At 1-161 (MESYLNSNFD…NKFAESELRS (161 aa)) the chain is on the cytoplasmic side. An interaction with calmodulin region spans residues 20–31 (VLEKWRNLCSVV). At Ser45 the chain carries Phosphoserine; by CPK. A helical transmembrane segment spans residues 162-182 (FWVFVWEALQDMTLMILGVCA). The Lumenal portion of the chain corresponds to 183-200 (FVSLIVGIATEGWPQGSH). Residues 201–221 (DGLGIVASILLVVFVTATSDY) form a helical membrane-spanning segment. The Cytoplasmic segment spans residues 222-349 (RQSLQFRDLD…DDETPLQVKL (128 aa)). A helical membrane pass occupies residues 350 to 369 (NGVATIIGKIGLSFAIVTFA). The Lumenal portion of the chain corresponds to 370-399 (VLVQGMFMRKLSLGPHWWWSGDDALELLEY). The helical transmembrane segment at 400 to 417 (FAIAVTIVVVAVPEGLPL) threads the bilayer. Topologically, residues 418 to 811 (AVTLSLAFAM…KWGRSVYINI (394 aa)) are cytoplasmic. Asp455 functions as the 4-aspartylphosphate intermediate in the catalytic mechanism. Residues Asp756 and Asp760 each contribute to the Mg(2+) site. The helical transmembrane segment at 812-830 (QKFVQFQLTVNVVALIVNF) threads the bilayer. Residues 831–841 (SSACLTGSAPL) are Lumenal-facing. Residues 842-862 (TAVQLLWVNMIMDTLGALALA) traverse the membrane as a helical segment. Topologically, residues 863–882 (TEPPNNELMKRMPVGRRGNF) are cytoplasmic. A helical transmembrane segment spans residues 883–905 (ITNAMWRNILGQAVYQFIIIWIL). Topologically, residues 906-917 (QAKGKSMFGLVG) are lumenal. Residues 918-939 (SDSTLVLNTLIFNCFVFCQVFN) form a helical membrane-spanning segment. Residues 940 to 957 (EVSSREMEEIDVFKGILD) lie on the Cytoplasmic side of the membrane. The chain crosses the membrane as a helical span at residues 958–979 (NYVFVVVIGATVFFQIIIIEFL). Topologically, residues 980 to 989 (GTFASTTPLT) are lumenal. A helical transmembrane segment spans residues 990–1011 (IVQWFFSIFVGFLGMPIAAGLK). Residues 1012–1015 (KIPV) are Cytoplasmic-facing.

Belongs to the cation transport ATPase (P-type) (TC 3.A.3) family. Type IIB subfamily.

The protein localises to the membrane. The catalysed reaction is Ca(2+)(in) + ATP + H2O = Ca(2+)(out) + ADP + phosphate + H(+). Its activity is regulated as follows. Activated by calmodulin. Functionally, this magnesium-dependent enzyme catalyzes the hydrolysis of ATP coupled with the translocation of calcium from the cytosol out of the cell or into organelles. The protein is Putative calcium-transporting ATPase 7, plasma membrane-type (ACA7) of Arabidopsis thaliana (Mouse-ear cress).